The following is a 165-amino-acid chain: UPF0763 protein NIS_0363 (165 aa).

This sequence belongs to the UPF0763 family.

The polypeptide is UPF0763 protein NIS_0363 (Nitratiruptor sp. (strain SB155-2)).